The following is a 774-amino-acid chain: DNA ligase 3 (774 aa).

The interval 1–25 is disordered; sequence MPPKKRMKNGSSLKSTSKKGEKSRN. Lys433 functions as the N6-AMP-lysine intermediate in the catalytic mechanism.

It belongs to the ATP-dependent DNA ligase family.

It localises to the nucleus. The enzyme catalyses ATP + (deoxyribonucleotide)n-3'-hydroxyl + 5'-phospho-(deoxyribonucleotide)m = (deoxyribonucleotide)n+m + AMP + diphosphate.. This Schizosaccharomyces pombe (strain 972 / ATCC 24843) (Fission yeast) protein is DNA ligase 3 (adl1).